Reading from the N-terminus, the 109-residue chain is Urease subunit gamma (109 aa).

Belongs to the urease gamma subunit family. As to quaternary structure, heterotrimer of UreA (gamma), UreB (beta) and UreC (alpha) subunits. Three heterotrimers associate to form the active enzyme.

The protein resides in the cytoplasm. The enzyme catalyses urea + 2 H2O + H(+) = hydrogencarbonate + 2 NH4(+). Its pathway is nitrogen metabolism; urea degradation; CO(2) and NH(3) from urea (urease route): step 1/1. The chain is Urease subunit gamma from Natronomonas pharaonis (strain ATCC 35678 / DSM 2160 / CIP 103997 / JCM 8858 / NBRC 14720 / NCIMB 2260 / Gabara) (Halobacterium pharaonis).